Consider the following 308-residue polypeptide: Ornithine carbamoyltransferase (308 aa).

Residues 57 to 60 (STRT), glutamine 84, arginine 108, and 135 to 138 (HPCQ) each bind carbamoyl phosphate. Residues asparagine 166, aspartate 224, and 228–229 (SM) each bind L-ornithine. Residues 264–265 (CL) and arginine 292 each bind carbamoyl phosphate.

The protein belongs to the aspartate/ornithine carbamoyltransferase superfamily. OTCase family.

It is found in the cytoplasm. It catalyses the reaction carbamoyl phosphate + L-ornithine = L-citrulline + phosphate + H(+). The protein operates within amino-acid biosynthesis; L-arginine biosynthesis; L-arginine from L-ornithine and carbamoyl phosphate: step 1/3. In terms of biological role, reversibly catalyzes the transfer of the carbamoyl group from carbamoyl phosphate (CP) to the N(epsilon) atom of ornithine (ORN) to produce L-citrulline. The protein is Ornithine carbamoyltransferase of Ralstonia nicotianae (strain ATCC BAA-1114 / GMI1000) (Ralstonia solanacearum).